Consider the following 476-residue polypeptide: Aspartyl/glutamyl-tRNA(Asn/Gln) amidotransferase subunit B (476 aa).

The protein belongs to the GatB/GatE family. GatB subfamily. In terms of assembly, heterotrimer of A, B and C subunits.

It catalyses the reaction L-glutamyl-tRNA(Gln) + L-glutamine + ATP + H2O = L-glutaminyl-tRNA(Gln) + L-glutamate + ADP + phosphate + H(+). It carries out the reaction L-aspartyl-tRNA(Asn) + L-glutamine + ATP + H2O = L-asparaginyl-tRNA(Asn) + L-glutamate + ADP + phosphate + 2 H(+). In terms of biological role, allows the formation of correctly charged Asn-tRNA(Asn) or Gln-tRNA(Gln) through the transamidation of misacylated Asp-tRNA(Asn) or Glu-tRNA(Gln) in organisms which lack either or both of asparaginyl-tRNA or glutaminyl-tRNA synthetases. The reaction takes place in the presence of glutamine and ATP through an activated phospho-Asp-tRNA(Asn) or phospho-Glu-tRNA(Gln). The chain is Aspartyl/glutamyl-tRNA(Asn/Gln) amidotransferase subunit B from Oceanobacillus iheyensis (strain DSM 14371 / CIP 107618 / JCM 11309 / KCTC 3954 / HTE831).